A 66-amino-acid chain; its full sequence is uncharacterized protein (66 aa).

This is an uncharacterized protein from Vaccinia virus (strain Copenhagen) (VACV).